A 515-amino-acid polypeptide reads, in one-letter code: Recombining binding protein suppressor of hairless-like protein (515 aa).

Residues 1-40 (MDPRETTDPSLPPGPLTHLSLPDSSEVRLQSDGPSLLGSW) form a disordered region. DNA-binding stretches follow at residues 76-86 (QKSYGNEKRFF), 191-196 (SKPSQK), and 218-223 (RLRSQT). An IPT/TIG domain is found at 384 to 474 (PLISTLELSG…YPSPFSFTYT (91 aa)).

The protein belongs to the Su(H) family. As to quaternary structure, interacts weakly with EBNA2. Does not interact with any Notch proteins. Highly expressed in lung. Also detected in spleen, and brain.

The protein resides in the nucleus. Its function is as follows. Putative transcription factor, which cooperates with EBNA2 to activate transcription. The protein is Recombining binding protein suppressor of hairless-like protein (Rbpjl) of Mus musculus (Mouse).